The primary structure comprises 63 residues: Large ribosomal subunit protein uL29 (63 aa).

This sequence belongs to the universal ribosomal protein uL29 family.

The polypeptide is Large ribosomal subunit protein uL29 (Shewanella frigidimarina (strain NCIMB 400)).